Here is a 299-residue protein sequence, read N- to C-terminus: Cytidine deaminase (299 aa).

CMP/dCMP-type deaminase domains lie at 56–176 (SKIE…FGPK) and 194–299 (LQGD…YIAV). Residue 97-99 (NQE) coordinates substrate. Position 110 (His110) interacts with Zn(2+). Residue Glu112 is the Proton donor of the active site. 2 residues coordinate Zn(2+): Cys137 and Cys140.

The protein belongs to the cytidine and deoxycytidylate deaminase family. Homodimer. It depends on Zn(2+) as a cofactor.

It catalyses the reaction cytidine + H2O + H(+) = uridine + NH4(+). It carries out the reaction 2'-deoxycytidine + H2O + H(+) = 2'-deoxyuridine + NH4(+). This enzyme scavenges exogenous and endogenous cytidine and 2'-deoxycytidine for UMP synthesis. The chain is Cytidine deaminase from Haemophilus ducreyi (strain 35000HP / ATCC 700724).